A 275-amino-acid polypeptide reads, in one-letter code: Apoptosis inhibitor 1 (275 aa).

2 BIR repeats span residues 24 to 91 (LIER…CVYA) and 126 to 193 (PSAR…CYFV). Residues C163, C166, H183, and C190 each contribute to the Zn(2+) site. Residues 227–263 (CKVCLERQRDAVLLPCRHFCVCMQCYFALDGKCPTCR) form an RING-type zinc finger.

Functionally, acts by blocking cellular apoptosis rather than by preventing viral stimulation of apoptosis. This is Apoptosis inhibitor 1 (IAP1) from Orgyia pseudotsugata (Douglas-fir tussock moth).